A 360-amino-acid polypeptide reads, in one-letter code: uncharacterized protein (360 aa).

Helical transmembrane passes span Ile12–Ile32, Val52–Val72, Ile96–Ile116, Ile278–Tyr298, Phe306–Leu326, and Phe336–Val356.

The protein localises to the cell membrane. This is an uncharacterized protein from Rickettsia prowazekii (strain Madrid E).